A 203-amino-acid chain; its full sequence is NADH dehydrogenase [ubiquinone] 1 alpha subcomplex assembly factor 4 (203 aa).

The protein belongs to the NDUFAF4 family. In terms of assembly, together with NdufAF3 associates with mitochondrial complex I assembly intermediates during its biogenesis.

Functionally, involved in the assembly of mitochondrial NADH:ubiquinone oxidoreductase complex (complex I). Together with NdufAF3, involved in biogenesis of complex 1 modules N, Q and P-peripheral, but not the P-distal module. Required for recruitment of the complex I assembly factor Timmdc1 to complex 1 assembly intermediates. This chain is NADH dehydrogenase [ubiquinone] 1 alpha subcomplex assembly factor 4, found in Drosophila melanogaster (Fruit fly).